A 230-amino-acid chain; its full sequence is uncharacterized protein (230 aa).

Residues 19-39 (GIFQVLLQLVLAMMTVWDFAG) form a helical membrane-spanning segment. An N-linked (GlcNAc...) asparagine; by host glycan is attached at asparagine 41. The helical transmembrane segment at 55 to 75 (SFLLVLYTGLKQILEYMFSIC) threads the bilayer. Asparagine 86, asparagine 157, asparagine 168, and asparagine 182 each carry an N-linked (GlcNAc...) asparagine; by host glycan. A coiled-coil region spans residues 172–196 (TNLHKYQNDENDTEEDSEDIEKNSD). A disordered region spans residues 178–205 (QNDENDTEEDSEDIEKNSDPKENSDIDS). A compositionally biased stretch (acidic residues) spans 180 to 190 (DENDTEEDSED). Basic and acidic residues predominate over residues 191-201 (IEKNSDPKENS).

Its subcellular location is the membrane. This is an uncharacterized protein from Acanthamoeba polyphaga mimivirus (APMV).